The chain runs to 95 residues: Glutamyl-tRNA(Gln) amidotransferase subunit C (95 aa).

The protein belongs to the GatC family. As to quaternary structure, heterotrimer of A, B and C subunits.

The catalysed reaction is L-glutamyl-tRNA(Gln) + L-glutamine + ATP + H2O = L-glutaminyl-tRNA(Gln) + L-glutamate + ADP + phosphate + H(+). It carries out the reaction L-aspartyl-tRNA(Asn) + L-glutamine + ATP + H2O = L-asparaginyl-tRNA(Asn) + L-glutamate + ADP + phosphate + 2 H(+). Functionally, allows the formation of correctly charged Asn-tRNA(Asn) or Gln-tRNA(Gln) through the transamidation of misacylated Asp-tRNA(Asn) or Glu-tRNA(Gln) in organisms which lack either or both of asparaginyl-tRNA or glutaminyl-tRNA synthetases. The reaction takes place in the presence of glutamine and ATP through an activated phospho-Asp-tRNA(Asn) or phospho-Glu-tRNA(Gln). This is Glutamyl-tRNA(Gln) amidotransferase subunit C from Mesorhizobium japonicum (strain LMG 29417 / CECT 9101 / MAFF 303099) (Mesorhizobium loti (strain MAFF 303099)).